The sequence spans 181 residues: TATA-box-binding protein (181 aa).

2 tandem repeats follow at residues 7 to 83 (IVNV…IKEL) and 98 to 173 (VQNM…SKTL).

Belongs to the TBP family.

In terms of biological role, general factor that plays a role in the activation of archaeal genes transcribed by RNA polymerase. Binds specifically to the TATA box promoter element which lies close to the position of transcription initiation. The polypeptide is TATA-box-binding protein (Methanococcus maripaludis (strain C6 / ATCC BAA-1332)).